The primary structure comprises 298 residues: N-acetylmuramic acid 6-phosphate etherase (298 aa).

In terms of domain architecture, SIS spans 55–218 (IHAQVSGGGR…STGLMIKSGK (164 aa)). Glu-83 acts as the Proton donor in catalysis. Residue Glu-114 is part of the active site.

The protein belongs to the GCKR-like family. MurNAc-6-P etherase subfamily. Homodimer.

The enzyme catalyses N-acetyl-D-muramate 6-phosphate + H2O = N-acetyl-D-glucosamine 6-phosphate + (R)-lactate. Its pathway is amino-sugar metabolism; N-acetylmuramate degradation. It functions in the pathway amino-sugar metabolism; 1,6-anhydro-N-acetylmuramate degradation. The protein operates within cell wall biogenesis; peptidoglycan recycling. In terms of biological role, specifically catalyzes the cleavage of the D-lactyl ether substituent of MurNAc 6-phosphate, producing GlcNAc 6-phosphate and D-lactate. Together with AnmK, is also required for the utilization of anhydro-N-acetylmuramic acid (anhMurNAc) either imported from the medium or derived from its own cell wall murein, and thus plays a role in cell wall recycling. This Escherichia coli (strain K12 / MC4100 / BW2952) protein is N-acetylmuramic acid 6-phosphate etherase.